Consider the following 496-residue polypeptide: Lysine--tRNA ligase (496 aa).

Glu-409 and Glu-416 together coordinate Mg(2+).

The protein belongs to the class-II aminoacyl-tRNA synthetase family. As to quaternary structure, homodimer. Mg(2+) is required as a cofactor.

It is found in the cytoplasm. The enzyme catalyses tRNA(Lys) + L-lysine + ATP = L-lysyl-tRNA(Lys) + AMP + diphosphate. The chain is Lysine--tRNA ligase from Streptococcus sanguinis (strain SK36).